The primary structure comprises 585 residues: Cyclic nucleotide-binding domain-containing protein 2 (585 aa).

116–239 (SYRNYAEPLQ…DAQYRFEFFR (124 aa)) contacts a nucleoside 3',5'-cyclic phosphate.

Its subcellular location is the cytoplasm. The protein resides in the cytosol. Its function is as follows. Essential for male fertility. Plays an important role in spermatogenesis and regulates sperm motility by controlling the development of the flagellar bending of sperm. This chain is Cyclic nucleotide-binding domain-containing protein 2 (CNBD2), found in Macaca fascicularis (Crab-eating macaque).